The chain runs to 1649 residues: eIF-2-alpha kinase GCN2 (1649 aa).

Residues 1-26 (MAGGRGAAGRGPAEPQESYSQRQDHE) form a disordered region. One can recognise an RWD domain in the interval 25–137 (HELQALEAIY…HHVQSFLSEH (113 aa)). Residues 146–205 (HEEMLERQAQEKQQRLLEARQKEEQEQREILHEIQKRKEEIKEEKKRKEMAKQERLEITS) adopt a coiled-coil conformation. The interval 227 to 260 (HGGSPDFVGNGKARAHSSGRSRRERQYSVCSGEA) is disordered. The residue at position 230 (Ser-230) is a Phosphoserine. Residues 239 to 249 (ARAHSSGRSRR) show a composition bias toward basic residues. Protein kinase domains follow at residues 296–539 (VYNA…HSFI) and 590–1001 (FEEL…SELL). ATP contacts are provided by residues 596–604 (LGKGAFGAV) and Lys-619. Residues 662–785 (PAVPGTPPPD…CNEKDSRHEI (124 aa)) are disordered. Thr-667 is subject to Phosphothreonine. Over residues 705–721 (LSSSVEWSTSAERSNSA) the composition is skewed to polar residues. Composition is skewed to acidic residues over residues 731 to 740 (SSDEEDEDER) and 754 to 764 (SDSDIIFDNED). Asp-847 serves as the catalytic Proton acceptor. The residue at position 870 (Thr-870) is a Phosphothreonine. Thr-899 and Thr-904 each carry phosphothreonine; by autocatalysis. The histidyl-tRNA synthetase-like stretch occupies residues 1022–1493 (TDGKAYRTMM…DHVMQKLRTK (472 aa)). Lys-1259 carries the post-translational modification N6-acetyllysine.

The protein belongs to the protein kinase superfamily. Ser/Thr protein kinase family. GCN2 subfamily. In terms of assembly, homodimer; homodimerization is important for kinase activation by uncharged tRNAs. Interacts with GCN1; this interaction stimulates EIF2AK4/GCN2 kinase activity and is impaired by IMPACT upon a variety of stress conditions, such as amino acid depletion, UV-C irradiation, proteasome inhibitor treatment and glucose deprivation. Interacts with DNAJC3; this interaction inhibits EIF2AK4/GCN2 kinase activity during endoplasmic reticulum (ER), hypothermic and amino acid-starving stress conditions. Interacts with MAP3K20; activates EIF2AK4/GCN2 kinase activity in response to moderate ribotoxic stress. In terms of processing, autophosphorylated; autophosphorylation on Thr-899 is increased upon amino acid starvation and in UV irradiation cells and inhibited in presence of IMPACT.

It is found in the cytoplasm. The enzyme catalyses L-seryl-[protein] + ATP = O-phospho-L-seryl-[protein] + ADP + H(+). It catalyses the reaction L-threonyl-[protein] + ATP = O-phospho-L-threonyl-[protein] + ADP + H(+). In terms of biological role, metabolic-stress sensing protein kinase that phosphorylates the alpha subunit of eukaryotic translation initiation factor 2 (EIF2S1/eIF-2-alpha) in response to low amino acid availability. Plays a role as an activator of the integrated stress response (ISR) required for adaptation to amino acid starvation. EIF2S1/eIF-2-alpha phosphorylation in response to stress converts EIF2S1/eIF-2-alpha into a global protein synthesis inhibitor, leading to a global attenuation of cap-dependent translation, and thus to a reduced overall utilization of amino acids, while concomitantly initiating the preferential translation of ISR-specific mRNAs, such as the transcriptional activator ATF4, and hence allowing ATF4-mediated reprogramming of amino acid biosynthetic gene expression to alleviate nutrient depletion. Required for the translational induction of protein kinase PRKCH following amino acid starvation. Binds uncharged tRNAs. Involved in cell cycle arrest by promoting cyclin D1 mRNA translation repression after the unfolded protein response pathway (UPR) activation or cell cycle inhibitor CDKN1A/p21 mRNA translation activation in response to amino acid deprivation. Plays a role in the consolidation of synaptic plasticity, learning as well as formation of long-term memory. Plays a role in neurite outgrowth inhibition. Plays a role in feeding behavior to maintain amino acid homeostasis; contributes to the innate aversion toward diets of imbalanced amino acid composition. Plays a proapoptotic role in response to glucose deprivation. Promotes global cellular protein synthesis repression in response to UV irradiation independently of the stress-activated protein kinase/c-Jun N-terminal kinase (SAPK/JNK) and p38 MAPK signaling pathways. Plays a role in the antiviral response against alphavirus infection; impairs early viral mRNA translation of the incoming genomic virus RNA, thus preventing alphavirus replication. This is eIF-2-alpha kinase GCN2 from Rattus norvegicus (Rat).